An 87-amino-acid chain; its full sequence is U3-theraphotoxin-Hhn1g (87 aa).

The N-terminal stretch at 1–24 (MVNMKASMFLTFAGLVLLFVVCFA) is a signal peptide. The propeptide occupies 25-52 (SESEEKEFPKEMLSSIFAVDNDFKQEER). Intrachain disulfides connect Cys-54-Cys-67, Cys-61-Cys-72, and Cys-66-Cys-79.

The protein belongs to the neurotoxin 10 (Hwtx-1) family. 51 (Hntx-8) subfamily. Hntx-8 sub-subfamily. As to expression, expressed by the venom gland.

Its subcellular location is the secreted. Ion channel inhibitor. This is U3-theraphotoxin-Hhn1g from Cyriopagopus hainanus (Chinese bird spider).